The following is a 395-amino-acid chain: THP3 homolog C2A9.11c (395 aa).

Residues 91–127 (LLSEEDEVDKKEKRRRRFENGSRSQNNAKSEELKVNP) are disordered. A PCI domain is found at 218 to 384 (DVGEYNQCQT…STDRFEKCMK (167 aa)).

Belongs to the THP3 family.

It is found in the cytoplasm. The protein resides in the nucleus. Required for transcription elongation. May also be involved in pre-mRNA splicing. The chain is THP3 homolog C2A9.11c from Schizosaccharomyces pombe (strain 972 / ATCC 24843) (Fission yeast).